We begin with the raw amino-acid sequence, 283 residues long: uncharacterized protein (283 aa).

Positions 208 to 232 (SMENKVNETQNSKEDEKKKNDGDGK) are enriched in basic and acidic residues. The interval 208 to 237 (SMENKVNETQNSKEDEKKKNDGDGKRSKKK) is disordered.

This is an uncharacterized protein from Saccharomyces cerevisiae (strain ATCC 204508 / S288c) (Baker's yeast).